Consider the following 1167-residue polypeptide: Phenyloxazoline synthase MbtB (1167 aa).

The Carrier 1 domain occupies 2-78 (EAVVTSSQTV…AWTRLVGERT (77 aa)). The residue at position 39 (S39) is an O-(pantetheine 4'-phosphoryl)serine. The tract at residues 78 to 100 (TAESPGAATQSGDTAASAGDPDA) is disordered. A condensation/cyclization region spans residues 98 to 390 (PDAPFPLAPI…SSLMLDVDFT (293 aa)). The interval 575-967 (TYAELRERVL…RIAGVEAAVA (393 aa)) is adenylation. Positions 1054 to 1130 (VPSTALERAL…ALARRLVDHE (77 aa)) constitute a Carrier 2 domain. S1089 is modified (O-(pantetheine 4'-phosphoryl)serine).

This sequence belongs to the ATP-dependent AMP-binding enzyme family. MbtB subfamily. It depends on pantetheine 4'-phosphate as a cofactor. Post-translationally, 4'-phosphopantetheine is transferred from CoA to a specific serine in each of the two carrier protein domains, leading to their activation from apo to holo forms.

It functions in the pathway siderophore biosynthesis; mycobactin biosynthesis. Functionally, involved in the initial steps of the mycobactin biosynthetic pathway. Putatively couples activated salicylic acid with serine or threonine and cyclizes this precursor to the hydroxyphenyloxazoline ring system present in this class of siderophores. The chain is Phenyloxazoline synthase MbtB (mbtB) from Mycobacterium sp. (strain MCS).